The chain runs to 1278 residues: MNQQNPEEEVSLVNNSGGGGIIEAPAIVEEKEEEGLQQKQEETIESTDPILVVVEEKLLEKSVDGEKEDDNSSSSNMEIDPVSPATVFCVKLKQPNSNLLHKMSVPELCRNFSAVAWCGKLNAIACASETCARIPSSKANTPFWIPIHILIPERPTECAVFNVVADSPRDSVQFIEWSPTSCPRALLIANFHGRITIWTQPTQGSANLVHDATSWQCEHEWRQDIAVVTKWLTGASPYRWLSSKPSSGTNAKSTFEEKFLSQSSESSARWPNFLCVCSVFSSGSVQIHWSQWPSNQGSTAPKWFSTKKGLLGAGPSGIMAADAIITDSGAMHVAGVPIVNPSTIVVWEVTPGPGNGLQATPKISTGSRVPPSLSSSSWTGFAPLAAYLFSWQEYLISEIKQGKKPSDQDSSDAISLSCSPVSNFSAYVSPEAAAQSAATTTWGSGVTAVAFDPTRGGSVIAVVIVEGQYMSPYDPDEGPSITGWRVQRWESSVQPVVLHQIFGNPTSNFGGQVPTQTVWVSRVDMSIPPTKDFKNHQVAAAGPSVDAPKEPDSGDEKANKVVFDPFDLPSDIRTLARIVYSAHGGEIAIAFLRGGVHIFSGPTFSPVENYQINVGSAIAAPAFSPTSCCSASVWHDAAKDCAMLKIIRVLPPALPRNQSKVDQSTWERAIAERFWWSLLVGVDWWDAVGCTQSAAEDGIVSLNSVIAVMDADFHSLPSTQHRQQYGPNLDRIKCRLLEGTNAQEVRAMVLDMQARLLLDMLGKGIESALVNPSALVFEPWRVDGETITGINPEAMAVDPALVSSIQAYVDAVLDLASHFITRLRRYASFCRTLASHAASAGTGSNRNNVTSPTQNASSPATPQVFPDKSLYLAVGQPTTTTTTTATTNSSGSSHVQAWMQGAIAKISSSNDGSNSTASPISGSPTFMPISINTGTFPGTPAVRLIGDCHFLHRLCQLLLFCFLQRSSRFPQRNADVSSQKLQTGATSKLEEVNSAKPTPALNRIEDAQGFRGAQLGTGVKGIDENSARTTKMGSGNAGQGYTYEEVRVLFHILMDLCKRTSGLAHPLPGSQVGSGNIQVRLHYIDGNYTVLPEVVEAALGPHMQNMPRPRGADAAGLLLRELELHPPSEEWHRRNLFGGPGSEPEDMILTDDVSKLSNSLDLPDTNFSGICDGYNRVHSLWPRKRRMSERDAAFGSNTSVGLGAYLGIMGSRRDVVTATWKTGLEGVWYKCIRCLRQTSAFASPGATKQPNPNERETWWTSRWVYCCPMCGGTWVRVV.

Positions 1-10 (MNQQNPEEEV) are enriched in acidic residues. 3 disordered regions span residues 1-21 (MNQQ…GGGI), 530-557 (TKDF…GDEK), and 839-861 (SAGT…SPAT). The span at 547-557 (APKEPDSGDEK) shows a compositional bias: basic and acidic residues. The segment covering 841–861 (GTGSNRNNVTSPTQNASSPAT) has biased composition (polar residues).

It belongs to the plant Mediator complex subunit 16 family. In terms of assembly, component of the Mediator complex.

The protein resides in the nucleus. Functionally, component of the Mediator complex, a coactivator involved in the regulated transcription of nearly all RNA polymerase II-dependent genes. Mediator functions as a bridge to convey information from gene-specific regulatory proteins to the basal RNA polymerase II transcription machinery. The Mediator complex, having a compact conformation in its free form, is recruited to promoters by direct interactions with regulatory proteins and serves for the assembly of a functional preinitiation complex with RNA polymerase II and the general transcription factors. Involved in the regulation of the circadian clock, in the control of flowering time, in freezing- and osmotic-stress tolerance and in both salicylic acid- and jasmonate-mediated defense gene expression. The sequence is that of Mediator of RNA polymerase II transcription subunit 16 (MED16) from Arabidopsis thaliana (Mouse-ear cress).